Consider the following 185-residue polypeptide: Ribosome-recycling factor (185 aa).

The protein belongs to the RRF family.

The protein resides in the cytoplasm. Responsible for the release of ribosomes from messenger RNA at the termination of protein biosynthesis. May increase the efficiency of translation by recycling ribosomes from one round of translation to another. This Geobacillus kaustophilus (strain HTA426) protein is Ribosome-recycling factor.